Here is a 147-residue protein sequence, read N- to C-terminus: Receptor activity-modifying protein 3 (147 aa).

The first 22 residues, Met1–Ala22, serve as a signal peptide directing secretion. Residues Gln23–Asp112 are Extracellular-facing. N-linked (GlcNAc...) asparagine glycosylation is found at Asn28, Asn57, Asn70, and Asn102. 2 disulfide bridges follow: Cys39–Cys71 and Cys56–Cys103. A helical membrane pass occupies residues Pro113–Val137. Residues Trp138–Leu147 lie on the Cytoplasmic side of the membrane.

This sequence belongs to the RAMP family. In terms of assembly, heterodimer of CALCRL and RAMP3; interaction induces allosteric modulation of CALCRL function and ligand specificity for adrenomedullin/ADM and intermedin/ADM2. Heterodimer of CALCR and RAMP3; interaction form the receptor complex AMYR3 for amylin/IAPP. Interacts with GPER1. Expressed predominantly in the testis, embryonic and adult brain and in kidney.

Its subcellular location is the cell membrane. The protein resides in the membrane. Accessory protein that interacts with and modulates the function of G-protein coupled receptors including calcitonin gene-related peptide type 1 receptor (CALCRL), calcitonin receptor (CALCR) and G-protein coupled estrogen receptor 1 (GPER1). Required for the transport of CALCRL and GPER1 receptors to the plasma membrane. Plays a role in cardioprotection by reducing cardiac hypertrophy and perivascular fibrosis in a GPER1-dependent manner. Together with CALCRL, form a receptor complex for adrenomedullin/ADM and intermedin/ADM2. Together with CALCR, act as a receptor complex for amylin/IAPP. This is Receptor activity-modifying protein 3 from Mus musculus (Mouse).